A 553-amino-acid chain; its full sequence is Dihydroxy-acid dehydratase (553 aa).

C49 is a [2Fe-2S] cluster binding site. D81 provides a ligand contact to Mg(2+). C122 is a [2Fe-2S] cluster binding site. Mg(2+) is bound by residues D123 and K124. K124 is subject to N6-carboxylysine. Residue C194 participates in [2Fe-2S] cluster binding. Residue E444 participates in Mg(2+) binding. S470 (proton acceptor) is an active-site residue.

The protein belongs to the IlvD/Edd family. Homodimer. It depends on [2Fe-2S] cluster as a cofactor. Mg(2+) serves as cofactor.

It carries out the reaction (2R)-2,3-dihydroxy-3-methylbutanoate = 3-methyl-2-oxobutanoate + H2O. It catalyses the reaction (2R,3R)-2,3-dihydroxy-3-methylpentanoate = (S)-3-methyl-2-oxopentanoate + H2O. Its pathway is amino-acid biosynthesis; L-isoleucine biosynthesis; L-isoleucine from 2-oxobutanoate: step 3/4. It participates in amino-acid biosynthesis; L-valine biosynthesis; L-valine from pyruvate: step 3/4. Its function is as follows. Functions in the biosynthesis of branched-chain amino acids. Catalyzes the dehydration of (2R,3R)-2,3-dihydroxy-3-methylpentanoate (2,3-dihydroxy-3-methylvalerate) into 2-oxo-3-methylpentanoate (2-oxo-3-methylvalerate) and of (2R)-2,3-dihydroxy-3-methylbutanoate (2,3-dihydroxyisovalerate) into 2-oxo-3-methylbutanoate (2-oxoisovalerate), the penultimate precursor to L-isoleucine and L-valine, respectively. The polypeptide is Dihydroxy-acid dehydratase (Aeropyrum pernix (strain ATCC 700893 / DSM 11879 / JCM 9820 / NBRC 100138 / K1)).